Reading from the N-terminus, the 119-residue chain is Ribosome-binding factor A (119 aa).

It belongs to the RbfA family. Monomer. Binds 30S ribosomal subunits, but not 50S ribosomal subunits or 70S ribosomes.

It is found in the cytoplasm. In terms of biological role, one of several proteins that assist in the late maturation steps of the functional core of the 30S ribosomal subunit. Associates with free 30S ribosomal subunits (but not with 30S subunits that are part of 70S ribosomes or polysomes). Required for efficient processing of 16S rRNA. May interact with the 5'-terminal helix region of 16S rRNA. This is Ribosome-binding factor A from Coxiella burnetii (strain CbuG_Q212) (Coxiella burnetii (strain Q212)).